The sequence spans 130 residues: Small ribosomal subunit protein uS9 (130 aa).

The protein belongs to the universal ribosomal protein uS9 family.

In Shewanella loihica (strain ATCC BAA-1088 / PV-4), this protein is Small ribosomal subunit protein uS9.